The primary structure comprises 785 residues: Pre-rRNA-processing protein TSR1 homolog (785 aa).

The interval 1–59 (MSTTGHRAGVFKKPSKPHKSWKGKRTKGEITSENRGREGVKQLTRSAHSTHRTISKDAR) is disordered. Basic residues predominate over residues 9-25 (GVFKKPSKPHKSWKGKR). The segment covering 26-40 (TKGEITSENRGREGV) has biased composition (basic and acidic residues). The Bms1-type G domain maps to 83–243 (APCLVTVVSL…LRILNETKKK (161 aa)). Residues 307 to 426 (PHPLKAHNKT…GETTASEMMF (120 aa)) form a disordered region. Over residues 376 to 409 (LDDEDDEDEEDSDEDMDDSDNEEVEDDSEEEEPM) the composition is skewed to acidic residues.

The protein belongs to the TRAFAC class translation factor GTPase superfamily. Bms1-like GTPase family. TSR1 subfamily.

The protein localises to the nucleus. It is found in the nucleolus. Its function is as follows. Required during maturation of the 40S ribosomal subunit in the nucleolus. The protein is Pre-rRNA-processing protein TSR1 homolog (tag-151) of Caenorhabditis elegans.